Reading from the N-terminus, the 2432-residue chain is uncharacterized protein (2432 aa).

The protein belongs to the IIV-6 261R/396L/443R family.

This is an uncharacterized protein from Invertebrate iridescent virus 6 (IIV-6).